The primary structure comprises 241 residues: MINKIKILFSFLALLLSFTSYAKAEDLHDKSELTDLALANAYGQYNHPFIKENIKSDEISGEKDLIFRNQGDSGNDLRVKFATADLAQKFKNKNVDIYGASFYYKCEKISENISECLYGGTTLNSEKLAQERVIGANVWVDGIQKETELIRTNKKNVTLQELDIKIRKILSDKYKIYYKDSEISKGLIEFDMKTPRDYSFDIYDLKGENDYEIDKIYEDNKTLKSDDISHIDVNLYTKKKV.

A signal peptide spans 1–24; that stretch reads MINKIKILFSFLALLLSFTSYAKA. Cysteine 106 and cysteine 116 are disulfide-bonded. The Zn(2+) site is built by aspartate 191, histidine 230, and aspartate 232.

It belongs to the staphylococcal/streptococcal toxin family. Interacts with host MHC class II molecules composed of alpha/HLA-DRA and beta/HLA-DRB1 chains. Interacts with host TCR alpha-chain TRAV27. Zn(2+) is required as a cofactor.

The protein resides in the secreted. In terms of biological role, staphylococcal enterotoxin that activates the host immune system by binding as unprocessed molecules to major histocompatibility (MHC) complex class II and T-cell receptor (TCR) molecules via their alpha domain, in particular TRAV27. In turn, this ternary complex activates a large number of T-lymphocytes initiating a systemic release of pro-inflammatory cytokines. Also causes the intoxication staphylococcal food poisoning syndrome. The illness characterized by high fever, hypotension, diarrhea, shock, and in some cases death. In Staphylococcus aureus, this protein is Enterotoxin type H (entH).